The chain runs to 781 residues: Sialidase (781 aa).

The first 24 residues, 1-24, serve as a signal peptide directing secretion; it reads MRFKNVKKTALMLAMFGMATSSNA. Arginine 224 contributes to the substrate binding site. The Proton acceptor role is filled by aspartate 250. BNR repeat units follow at residues 263–274 and 585–596; these read RTSRDGGITWDT and IYSDDGGSNWQT. Residue glutamate 619 is part of the active site. Arginine 635 serves as a coordination point for substrate. The BNR 3 repeat unit spans residues 653–664; it reads FLSKDGGITWSL. Residue arginine 712 coordinates substrate. The BNR 4 repeat unit spans residues 718-729; the sequence is WFSFDEGVTWKG. Residue tyrosine 740 is the Nucleophile of the active site.

Belongs to the glycosyl hydrolase 33 family. Monomer. Ca(2+) is required as a cofactor.

Its subcellular location is the secreted. It carries out the reaction Hydrolysis of alpha-(2-&gt;3)-, alpha-(2-&gt;6)-, alpha-(2-&gt;8)- glycosidic linkages of terminal sialic acid residues in oligosaccharides, glycoproteins, glycolipids, colominic acid and synthetic substrates.. Functionally, cleaves the terminal sialic acid (N-acetyl neuraminic acid) from carbohydrate chains in glycoproteins providing free sialic acid which can be used as carbon and energy sources. Sialidases have been suggested to be pathogenic factors in microbial infections. Facilitates cholera toxin binding to host intestinal epithelial cells by converting cell surface polysialogangliosides to GM1 monogangliosides. This is Sialidase (nanH) from Vibrio cholerae serotype O1 (strain ATCC 39541 / Classical Ogawa 395 / O395).